The following is a 345-amino-acid chain: L-threonine 3-dehydrogenase (345 aa).

C39 lines the Zn(2+) pocket. Residues T41 and H44 each act as charge relay system in the active site. Residues H64, E65, C94, C97, C100, and C108 each coordinate Zn(2+). NAD(+)-binding positions include I176, D196, R201, 263–265 (LGI), and 287–288 (VY).

It belongs to the zinc-containing alcohol dehydrogenase family. In terms of assembly, homotetramer. The cofactor is Zn(2+).

It localises to the cytoplasm. The catalysed reaction is L-threonine + NAD(+) = (2S)-2-amino-3-oxobutanoate + NADH + H(+). Its pathway is amino-acid degradation; L-threonine degradation via oxydo-reductase pathway; glycine from L-threonine: step 1/2. Its function is as follows. Catalyzes the NAD(+)-dependent oxidation of L-threonine to 2-amino-3-ketobutyrate. In Anaeromyxobacter dehalogenans (strain 2CP-1 / ATCC BAA-258), this protein is L-threonine 3-dehydrogenase.